Here is a 1460-residue protein sequence, read N- to C-terminus: DNA-directed RNA polymerase III subunit RPC1 (1460 aa).

Zn(2+) is bound by residues C67, C70, C77, H80, C107, C110, and C154. The Mg(2+) site is built by D511, D513, and D515. The segment at 858-870 (PPEFLFHAISGRE) is bridging helix.

The protein belongs to the RNA polymerase beta' chain family. As to quaternary structure, component of the RNA polymerase III (Pol III) complex consisting of 17 subunits.

The protein resides in the nucleus. The catalysed reaction is RNA(n) + a ribonucleoside 5'-triphosphate = RNA(n+1) + diphosphate. Functionally, DNA-dependent RNA polymerase catalyzes the transcription of DNA into RNA using the four ribonucleoside triphosphates as substrates. Largest and catalytic core component of RNA polymerase III which synthesizes small RNAs, such as 5S rRNA and tRNAs. Forms the polymerase active center together with the second largest subunit. A single-stranded DNA template strand of the promoter is positioned within the central active site cleft of Pol III. A bridging helix emanates from RPC1 and crosses the cleft near the catalytic site and is thought to promote translocation of Pol III by acting as a ratchet that moves the RNA-DNA hybrid through the active site by switching from straight to bent conformations at each step of nucleotide addition. In Saccharomyces cerevisiae (strain ATCC 204508 / S288c) (Baker's yeast), this protein is DNA-directed RNA polymerase III subunit RPC1 (RPO31).